Reading from the N-terminus, the 341-residue chain is MATIKDVAKRAGVSTTTVSHVINKTRFVAEETKAAVRAAIKELHYSPSAVARSLKVNHTKSIGLLATSSEAPYFAEIIEAVENSCYAKGYTLVLCNSHNDIGKQRAYLSMLAQKRVDGLLVMCAEYPPELLGMLEDYRSIPMVVMDWGQMHNDFTDTIIDNAFEGGYMAGRYLIERGHRDIGAIPGIQERNTGSGRYLGFLKALKEADITVRNEWVVQGDFEPESGYKAMHQILAQKQRPTAVFCGGDIMAMGAICAADELGLRVPQDISVIGYDNVRHARFFTPALTTIHQPKERLGQSAFSMLLDRITSKREDAHVIEVHPTLIERRSVADGPFRDYRR.

The HTH lacI-type domain maps to alanine 2–valine 56. Positions isoleucine 4–asparagine 23 form a DNA-binding region, H-T-H motif. Residues serine 48–valine 56 mediate DNA binding. Residues tyrosine 73, arginine 190, threonine 192, phenylalanine 221, and aspartate 275 each coordinate hypoxanthine.

Homodimer.

The protein operates within purine metabolism; purine nucleotide biosynthesis [regulation]. In terms of biological role, is the main repressor of the genes involved in the de novo synthesis of purine nucleotides, regulating purB, purC, purEK, purF, purHD, purL, purMN and guaBA expression. PurR is allosterically activated to bind its cognate DNA by binding the purine corepressors, hypoxanthine or guanine, thereby effecting transcription repression. The polypeptide is HTH-type transcriptional repressor PurR (Pectobacterium atrosepticum (strain SCRI 1043 / ATCC BAA-672) (Erwinia carotovora subsp. atroseptica)).